A 92-amino-acid chain; its full sequence is Small ribosomal subunit protein uS19 (92 aa).

This sequence belongs to the universal ribosomal protein uS19 family.

Its function is as follows. Protein S19 forms a complex with S13 that binds strongly to the 16S ribosomal RNA. The protein is Small ribosomal subunit protein uS19 of Novosphingobium aromaticivorans (strain ATCC 700278 / DSM 12444 / CCUG 56034 / CIP 105152 / NBRC 16084 / F199).